The following is a 449-amino-acid chain: Sensor protein QseC (449 aa).

Residues 1-12 (MKFTQRLSLRVR) lie on the Cytoplasmic side of the membrane. The helical transmembrane segment at 13-33 (LTLIFLILASVTWLLSSFVAW) threads the bilayer. Topologically, residues 34–156 (KQTTDNVDEL…QEWEYREDMA (123 aa)) are periplasmic. The helical transmembrane segment at 157 to 177 (LAIVAGQLIPWLVALPVMLII) threads the bilayer. The Cytoplasmic segment spans residues 178–449 (MMVLLGRELA…QGGFEAKVSW (272 aa)). The Histidine kinase domain occupies 243–449 (DAAHELRSPL…QGGFEAKVSW (207 aa)). Phosphohistidine; by autocatalysis is present on His246.

Its subcellular location is the cell inner membrane. The enzyme catalyses ATP + protein L-histidine = ADP + protein N-phospho-L-histidine.. Member of a two-component regulatory system QseB/QseC. Activates the flagella regulon by activating transcription of FlhDC. May activate QseB by phosphorylation. This Escherichia coli O157:H7 protein is Sensor protein QseC (qseC).